We begin with the raw amino-acid sequence, 55 residues long: MLRYAVIFFIIALIAALFGFGGIAAGAAGIAKILFMIFVVLFVVSLFWGLVAGRG.

2 consecutive transmembrane segments (helical) span residues 5–25 (AVIF…GIAA) and 33–53 (ILFM…LVAG).

The protein belongs to the UPF0391 family.

The protein localises to the cell membrane. This Ralstonia nicotianae (strain ATCC BAA-1114 / GMI1000) (Ralstonia solanacearum) protein is UPF0391 membrane protein RSp1666.